The sequence spans 326 residues: Archaeal actin homolog (326 aa).

Residues 10 to 14 (YGDTK), S179, Q231, 285 to 288 (GGSN), and Q311 contribute to the ATP site.

Belongs to the thermophilic archaeal actin family.

Functionally, polymerizes into bundles of filaments, forming a helix with a filament width of 5.5 nm and an axial repeating unit of 5.5 nm. Polymerization of Ta0583 requires NTP and is optimal with ATP, but GTP, UTP, CTP, and even the deoxy form of NTP can also support the polymerization reaction. Nucleoside diphosphate or AMP-PNP does not support polymerization. The chain is Archaeal actin homolog from Thermoplasma acidophilum (strain ATCC 25905 / DSM 1728 / JCM 9062 / NBRC 15155 / AMRC-C165).